A 55-amino-acid polypeptide reads, in one-letter code: U2-theraphotoxin-Cg1a (55 aa).

Residues aspartate 1–glutamate 19 constitute a propeptide that is removed on maturation. Cystine bridges form between cysteine 20-cysteine 34, cysteine 27-cysteine 39, and cysteine 33-cysteine 47.

This sequence belongs to the neurotoxin 10 (Hwtx-1) family. 06 (F4b) subfamily. As to expression, expressed by the venom gland.

It is found in the secreted. In terms of biological role, probable ion channel inhibitor. The protein is U2-theraphotoxin-Cg1a of Chilobrachys guangxiensis (Chinese earth tiger tarantula).